The chain runs to 441 residues: Plasmepsin VI (441 aa).

Residues 1-7 (MTNFCIK) are Cytoplasmic-facing. Residues 8–28 (SYLFLYLSFLLFFDIITIFHV) traverse the membrane as a helical; Signal-anchor for type II membrane protein segment. Topologically, residues 29-441 (SSIRISTVLK…VGVVKSNHNF (413 aa)) are extracellular. The Peptidase A1 domain occupies 109 to 435 (FIGDIEIGNP…DNDHKLVGVV (327 aa)). Residues Asp-127 and Asp-324 contribute to the active site.

The protein belongs to the peptidase A1 family.

It localises to the membrane. During the development in the mosquito midgut, plays a role in sporozoite egress from oocysts. In Plasmodium berghei (strain Anka), this protein is Plasmepsin VI.